Consider the following 392-residue polypeptide: MAFLMKKKKFKFQTTFTLEELTAVPFVNGVLFCKVRLLDGGDFVSLSSREEVQENCVRWRKRFTFVCKMSANPATGLLDPCIFRVSVRKELKGGKAYSKLGFTDLNLAEFAGSGSTVRCCLLEGYDTKNTRQDNSILKVTIGMFLLSGDPCFKTPPSTAKSISIPGQDSSLQLTCKGGGTSSGGSSSTNSLTGSRPPKTRPTILGSGLPEEPDQSLSSPEEVFHSGHSRNSSYASQQSKLSGYSTEHSRSSSLSDLTHRRNTSTSSSASGGLSMAVEGPEGMEREHRPSEKPPRPPEKPPRPPRPLHLSDRSFRRKKDSVESHPTWVDDTRIDADDIVEKIMQSQDFTDGSNTEDSNLRLFVSRDGSTTLSGIQLGNRVSSGVYEPVVIESH.

In terms of domain architecture, C2 NT-type spans 2–145 (AFLMKKKKFK…ILKVTIGMFL (144 aa)). The segment at 129-138 (NTRQDNSILK) is required for interaction with TNFRSF11A/RANK. Residues 173–324 (LTCKGGGTSS…RKKDSVESHP (152 aa)) are disordered. Positions 183–194 (GGSSSTNSLTGS) are enriched in low complexity. Residues 228–255 (SRNSSYASQQSKLSGYSTEHSRSSSLSD) show a composition bias toward polar residues. Residues 262-273 (TSTSSSASGGLS) show a composition bias toward low complexity. Basic and acidic residues-rich tracts occupy residues 281-300 (GMEREHRPSEKPPRPPEKPP) and 307-324 (HLSDRSFRRKKDSVESHP).

It belongs to the EEIG family. Part of a complex composed of EEIG1, TNFRSF11A/RANK, PLCG2, GAB2, TEC and BTK; complex formation increases in the presence of TNFSF11/RANKL. Interacts with PRDM1/BLIMP1; following TNFSF11/RANKL stimulation in bone marrow-derived macrophages, the interaction promotes the binding of PRDM1/BLIMP1 to the gene promoter of IRF8. Interacts (via N-terminus) with TNFRSF11A/RANK (via cytoplasmic domain); when in the presence of TNFSF11/RANKL. Expressed during TNFSF11/RANKL-induced differentiation of bone marrow-derived macrophages to osteoclasts.

It is found in the nucleus. The protein localises to the cytoplasm. It localises to the membrane raft. Its function is as follows. Key component of TNFSF11/RANKL- and TNF-induced osteoclastogenesis pathways, thereby mediates bone resorption in pathological bone loss conditions. Required for TNFSF11/RANKL-induced osteoclastogenesis via its interaction with TNFRSF11A/RANK, thereby facilitates the downsteam transcription of NFATC1 and activation of PLCG2. Facilitates recruitment of the transcriptional repressor PRDM1/BLIMP1 to the promoter of the anti-osteoclastogenesis gene IRF8, thereby resulting in transcription of osteoclast differentiation factors. May play a role in estrogen action. This Mus musculus (Mouse) protein is Early estrogen-induced gene 1 protein (Eeig1).